The sequence spans 1218 residues: Coatomer subunit alpha-2 (1218 aa).

WD repeat units lie at residues 7–48 (TKSN…DRFD), 49–88 (EHEGPVRGVHFHNSQPLFVSGGDDYKIKVWNYKTHRCLFT), 91–132 (GHLD…SVLT), 133–172 (GHNHYVMCASFHPKEDLVVSASLDQTVRVWDIGALKKKSA), 202–241 (GHDRGVNWASFHPTLPLIVSGADDRQVKLWRMNETKAWEV), 246–285 (GHMNNVSSVMFHAKQDIIVSNSEDKSIRVWDATKRTGIQT), 288–326 (REHDRFWILAVHPEINLLAAGHDNGMIVFKLERERPAFA), and 363–404 (SLNQ…VGRS). Residues 826–849 (NRGAVDEEEEDVEGDWGEGLDKFD) are disordered. Acidic residues predominate over residues 831-843 (DEEEEDVEGDWGE).

In terms of assembly, oligomeric complex that consists of at least the alpha, beta, beta', gamma, delta, epsilon and zeta subunits.

The protein resides in the cytoplasm. It is found in the golgi apparatus membrane. The protein localises to the cytoplasmic vesicle. Its subcellular location is the COPI-coated vesicle membrane. Functionally, the coatomer is a cytosolic protein complex that binds to dilysine motifs and reversibly associates with Golgi non-clathrin-coated vesicles, which further mediate biosynthetic protein transport from the ER, via the Golgi up to the trans Golgi network. Coatomer complex is required for budding from Golgi membranes, and is essential for the retrograde Golgi-to-ER transport of dilysine-tagged proteins. The chain is Coatomer subunit alpha-2 from Arabidopsis thaliana (Mouse-ear cress).